We begin with the raw amino-acid sequence, 351 residues long: MPSAPTWPALITTLIEGRHLSVSESTWAMRQVMRGEATPAQLGGLLVALRASGETVDEIVGFRDAVLEEALPLDADPRALDIVGTGGDPYGAVLNISSVASVIAAAAGVPVIKHGNRGASSASGASDVLTALGVDLSITPERVAEVLRETGITYAHAALFHPGFRHAAATRRELGISTLFNVLGPLCNPARPEASAVGVADLSRVPLMVGVFRTRGATALVYRGDDGIDKLTTTGHSHIWEVSRGAVTEHDLDPLELGIPRAPIEALLGEGVEQNAEVIRRVLAGEPGPQRDVVLLNAAAGLEAFDLMGDPTRVQQPMARRLREKVAIAADAVDSGRAAAKLEEWAAATRA.

Residues glycine 84, 87–88 (GD), 95–98 (NISS), 113–121 (KHGNRGASS), and alanine 125 contribute to the 5-phospho-alpha-D-ribose 1-diphosphate site. Glycine 84 is an anthranilate binding site. A Mg(2+)-binding site is contributed by serine 97. Asparagine 116 serves as a coordination point for anthranilate. Residue arginine 171 coordinates anthranilate. Mg(2+) is bound by residues aspartate 229 and lysine 230.

The protein belongs to the anthranilate phosphoribosyltransferase family. In terms of assembly, homodimer. Mg(2+) is required as a cofactor.

It carries out the reaction N-(5-phospho-beta-D-ribosyl)anthranilate + diphosphate = 5-phospho-alpha-D-ribose 1-diphosphate + anthranilate. Its pathway is amino-acid biosynthesis; L-tryptophan biosynthesis; L-tryptophan from chorismate: step 2/5. Its function is as follows. Catalyzes the transfer of the phosphoribosyl group of 5-phosphorylribose-1-pyrophosphate (PRPP) to anthranilate to yield N-(5'-phosphoribosyl)-anthranilate (PRA). This is Anthranilate phosphoribosyltransferase from Clavibacter michiganensis subsp. michiganensis (strain NCPPB 382).